Consider the following 382-residue polypeptide: Two-component response regulator ARR14 (382 aa).

One can recognise a Response regulatory domain in the interval 12-128; it reads RILVVDDDTS…ELKNIWQHVV (117 aa). 4-aspartylphosphate is present on D63. Positions 171–181 are enriched in basic residues; that stretch reads CRNKKKKKKRS. Residues 171–193 are disordered; it reads CRNKKKKKKRSVDRDDNEDDLLL. The short motif at 199 to 202 is the Nuclear localization signal element; it reads KKSR. Residues 202–252 constitute a DNA-binding region (myb-like GARP); it reads RVVWSIELHQQFVNAVNKLGIDKAVPKRILELMNVPGLSRENVASHLQKFR.

The protein belongs to the ARR family. Type-B subfamily. In terms of assembly, binds the target DNA as a monomer. Post-translationally, two-component system major event consists of a His-to-Asp phosphorelay between a sensor histidine kinase (HK) and a response regulator (RR). In plants, the His-to-Asp phosphorelay involves an additional intermediate named Histidine-containing phosphotransfer protein (HPt). This multistep phosphorelay consists of a His-Asp-His-Asp sequential transfer of a phosphate group between first a His and an Asp of the HK protein, followed by the transfer to a conserved His of the HPt protein and finally the transfer to an Asp in the receiver domain of the RR protein. In terms of tissue distribution, predominantly expressed in young leaf tissue.

It localises to the nucleus. Transcriptional activator that binds specifically to the DNA sequence 5'-[AG]GATT-3'. Functions as a response regulator involved in His-to-Asp phosphorelay signal transduction system. Phosphorylation of the Asp residue in the receiver domain activates the ability of the protein to promote the transcription of target genes. Could directly activate some type-A response regulators in response to cytokinins. This chain is Two-component response regulator ARR14 (ARR14), found in Arabidopsis thaliana (Mouse-ear cress).